The chain runs to 457 residues: Methylenetetrahydrofolate--tRNA-(uracil-5-)-methyltransferase TrmFO (457 aa).

7–12 (GAGLAG) contacts FAD. The interval 38–58 (FTSRQDEKTGTHDVRNATQTR) is disordered. A compositionally biased stretch (basic and acidic residues) spans 40 to 52 (SRQDEKTGTHDVR).

It belongs to the MnmG family. TrmFO subfamily. FAD serves as cofactor.

The protein resides in the cytoplasm. The catalysed reaction is uridine(54) in tRNA + (6R)-5,10-methylene-5,6,7,8-tetrahydrofolate + NADH + H(+) = 5-methyluridine(54) in tRNA + (6S)-5,6,7,8-tetrahydrofolate + NAD(+). It carries out the reaction uridine(54) in tRNA + (6R)-5,10-methylene-5,6,7,8-tetrahydrofolate + NADPH + H(+) = 5-methyluridine(54) in tRNA + (6S)-5,6,7,8-tetrahydrofolate + NADP(+). Catalyzes the folate-dependent formation of 5-methyl-uridine at position 54 (M-5-U54) in all tRNAs. The protein is Methylenetetrahydrofolate--tRNA-(uracil-5-)-methyltransferase TrmFO of Hydrogenobaculum sp. (strain Y04AAS1).